Here is a 581-residue protein sequence, read N- to C-terminus: DNA primase (581 aa).

The CHC2-type zinc-finger motif lies at 40–64 (CPFHNEKTPSFTVNGEKQFYHCFGC). The Toprim domain occupies 259–341 (NRLLVVEGYM…GRQLRFMFLP (83 aa)). Residues Glu-265, Asp-309, and Asp-311 each coordinate Mg(2+).

This sequence belongs to the DnaG primase family. As to quaternary structure, monomer. Interacts with DnaB. The cofactor is Zn(2+). It depends on Mg(2+) as a cofactor.

It catalyses the reaction ssDNA + n NTP = ssDNA/pppN(pN)n-1 hybrid + (n-1) diphosphate.. Functionally, RNA polymerase that catalyzes the synthesis of short RNA molecules used as primers for DNA polymerase during DNA replication. This is DNA primase from Shigella flexneri.